We begin with the raw amino-acid sequence, 213 residues long: 3,4-dihydroxy-2-butanone 4-phosphate synthase (213 aa).

Residues 37–38 (RE), D42, 150–154 (RPGHT), and E174 contribute to the D-ribulose 5-phosphate site. Residue E38 coordinates Mg(2+). H153 serves as a coordination point for Mg(2+).

The protein belongs to the DHBP synthase family. As to quaternary structure, homodimer. It depends on Mg(2+) as a cofactor. Mn(2+) is required as a cofactor.

The enzyme catalyses D-ribulose 5-phosphate = (2S)-2-hydroxy-3-oxobutyl phosphate + formate + H(+). It functions in the pathway cofactor biosynthesis; riboflavin biosynthesis; 2-hydroxy-3-oxobutyl phosphate from D-ribulose 5-phosphate: step 1/1. Catalyzes the conversion of D-ribulose 5-phosphate to formate and 3,4-dihydroxy-2-butanone 4-phosphate. The chain is 3,4-dihydroxy-2-butanone 4-phosphate synthase from Clostridium botulinum (strain ATCC 19397 / Type A).